A 439-amino-acid chain; its full sequence is GTPase Der (439 aa).

EngA-type G domains lie at 4-168 (PIVA…KDDE) and 177-352 (INIA…DNYN). GTP contacts are provided by residues 10 to 17 (GRPNVGKS), 57 to 61 (DTGGI), 120 to 123 (NKID), 183 to 190 (GKPNVGKS), 230 to 234 (DTAGL), and 295 to 298 (NKWD). The region spanning 353–437 (KRVKTGVLND…GIKSEFRERK (85 aa)) is the KH-like domain.

The protein belongs to the TRAFAC class TrmE-Era-EngA-EngB-Septin-like GTPase superfamily. EngA (Der) GTPase family. In terms of assembly, associates with the 50S ribosomal subunit.

In terms of biological role, GTPase that plays an essential role in the late steps of ribosome biogenesis. The sequence is that of GTPase Der from Clostridium botulinum (strain ATCC 19397 / Type A).